The sequence spans 326 residues: Aspartate carbamoyltransferase catalytic subunit (326 aa).

2 residues coordinate carbamoyl phosphate: Arg-65 and Thr-66. L-aspartate is bound at residue Lys-93. Residues Arg-115, His-143, and Gln-146 each contribute to the carbamoyl phosphate site. Residues Arg-176 and Arg-230 each coordinate L-aspartate. Positions 271 and 272 each coordinate carbamoyl phosphate.

The protein belongs to the aspartate/ornithine carbamoyltransferase superfamily. ATCase family. In terms of assembly, heterododecamer (2C3:3R2) of six catalytic PyrB chains organized as two trimers (C3), and six regulatory PyrI chains organized as three dimers (R2).

The catalysed reaction is carbamoyl phosphate + L-aspartate = N-carbamoyl-L-aspartate + phosphate + H(+). The protein operates within pyrimidine metabolism; UMP biosynthesis via de novo pathway; (S)-dihydroorotate from bicarbonate: step 2/3. Its function is as follows. Catalyzes the condensation of carbamoyl phosphate and aspartate to form carbamoyl aspartate and inorganic phosphate, the committed step in the de novo pyrimidine nucleotide biosynthesis pathway. This is Aspartate carbamoyltransferase catalytic subunit from Mesorhizobium japonicum (strain LMG 29417 / CECT 9101 / MAFF 303099) (Mesorhizobium loti (strain MAFF 303099)).